The following is a 398-amino-acid chain: SEC12-like protein 1 (398 aa).

Methionine 1 bears the N-acetylmethionine mark. The Cytoplasmic portion of the chain corresponds to 1 to 337; that stretch reads MEIEEASRES…TVPKEWKEWQ (337 aa). WD repeat units follow at residues 71-110, 120-159, 162-201, 252-291, and 296-334; these read DSDG…TGIT, QNAG…VILD, KAHK…PLST, LSRK…IYHY, and HLGQ…KEWK. Residues 338 to 358 form a helical membrane-spanning segment; sequence IYALLFCLFMASVIAAYVFFE. The Lumenal segment spans residues 359–398; it reads NSDSFWKLPMGKDQKRPKISLFGGSSSTPSEDHSRWNLDL.

Ubiquitous with higher levels in flowers, roots and senescing leaves.

The protein localises to the endoplasmic reticulum membrane. In terms of biological role, involved in Pi uptake by facilitating the trafficking of PHT1-1/PHT1;1 from the endoplasmic reticulum to the plasma membrane. In Arabidopsis thaliana (Mouse-ear cress), this protein is SEC12-like protein 1 (PHF1).